A 428-amino-acid chain; its full sequence is 47 kDa outer membrane protein (428 aa).

The first 25 residues, 1 to 25 (MAKTSKFTQTLLASALAVVAGSASA), serve as a signal peptide directing secretion.

The protein belongs to the OmpP1/FadL family.

Its subcellular location is the cell outer membrane. In Pasteurella multocida (strain Pm70), this protein is 47 kDa outer membrane protein.